A 282-amino-acid polypeptide reads, in one-letter code: Halorhodopsin (282 aa).

Residues 1 to 29 lie on the Extracellular side of the membrane; sequence MMETAADALASGTVPLEMTQTQIFEAIQG. A helical transmembrane segment spans residues 30-55; sequence DTLLASSLWINIALAGLSILLFVYMG. Over 56–61 the chain is Cytoplasmic; it reads RNLEDP. Residues 62 to 85 form a helical membrane-spanning segment; the sequence is RAQLIFVATLMVPLVSISSYTGLV. The Extracellular portion of the chain corresponds to 86–109; sequence SGLTVSFLEMPAGHALAGQEVLTP. The helical transmembrane segment at 110–131 threads the bilayer; the sequence is WGRYLTWALSTPMILVALGLLA. Topologically, residues 132-134 are cytoplasmic; that stretch reads GSN. A helical transmembrane segment spans residues 135 to 158; that stretch reads ATKLFTAVTADIGMCVTGLAAALT. Topologically, residues 159 to 161 are extracellular; the sequence is TSS. Residues 162-184 form a helical membrane-spanning segment; the sequence is YLLRWVWYVISCAFFVVVLYVLL. At 185 to 196 the chain is on the cytoplasmic side; that stretch reads AEWAEDAEVAGT. A helical transmembrane segment spans residues 197–220; it reads AEIFNTLKLLTVVLWLGYPIFWAL. Residues 221–229 lie on the Extracellular side of the membrane; that stretch reads GAEGLAVLD. The chain crosses the membrane as a helical span at residues 230–258; the sequence is VAVTSWAYSGMDIVAKYLFAFLLLRWVVD. Lys245 bears the N6-(retinylidene)lysine mark. Residues 259 to 282 are Cytoplasmic-facing; it reads NERTVAGMAAGLGAPLARCAPADD.

It belongs to the archaeal/bacterial/fungal opsin family.

Its subcellular location is the cell membrane. Light-driven chloride pump. The sequence is that of Halorhodopsin (hop) from Halorubrum sodomense.